A 144-amino-acid chain; its full sequence is HTH-type transcriptional regulator LrpC (144 aa).

The 62-residue stretch at 3-64 (LDQIDLNIIE…EVDQKKLGLP (62 aa)) folds into the HTH asnC-type domain. Residues 22-41 (MRELGRKIKLSPPSVTERVR) constitute a DNA-binding region (H-T-H motif).

In terms of biological role, transcriptional regulator with a possible role in regulation of amino acid metabolism. Plays a role in the growth phase transition. This is HTH-type transcriptional regulator LrpC (lrpC) from Bacillus subtilis (strain 168).